The chain runs to 617 residues: Proline--tRNA ligase (617 aa).

It belongs to the class-II aminoacyl-tRNA synthetase family. ProS type 1 subfamily. Homodimer.

It is found in the cytoplasm. The catalysed reaction is tRNA(Pro) + L-proline + ATP = L-prolyl-tRNA(Pro) + AMP + diphosphate. Functionally, catalyzes the attachment of proline to tRNA(Pro) in a two-step reaction: proline is first activated by ATP to form Pro-AMP and then transferred to the acceptor end of tRNA(Pro). As ProRS can inadvertently accommodate and process non-cognate amino acids such as alanine and cysteine, to avoid such errors it has two additional distinct editing activities against alanine. One activity is designated as 'pretransfer' editing and involves the tRNA(Pro)-independent hydrolysis of activated Ala-AMP. The other activity is designated 'posttransfer' editing and involves deacylation of mischarged Ala-tRNA(Pro). The misacylated Cys-tRNA(Pro) is not edited by ProRS. The chain is Proline--tRNA ligase from Streptococcus agalactiae serotype III (strain NEM316).